The following is a 262-amino-acid chain: Cytochrome c oxidase subunit 3 (262 aa).

7 helical membrane-spanning segments follow: residues 16–36, 39–59, 83–103, 128–148, 160–180, 198–218, and 241–261; these read PWPY…VVYF, SQTW…IVWW, GMLL…WAFF, FSVP…VTWA, AING…LQAM, FFVA…FLAV, and WYWH…YWWG.

Belongs to the cytochrome c oxidase subunit 3 family. Component of the cytochrome c oxidase (complex IV, CIV), a multisubunit enzyme composed of a catalytic core of 3 subunits and several supernumerary subunits. The complex exists as a monomer or a dimer and forms supercomplexes (SCs) in the inner mitochondrial membrane with ubiquinol-cytochrome c oxidoreductase (cytochrome b-c1 complex, complex III, CIII).

The protein resides in the mitochondrion inner membrane. It catalyses the reaction 4 Fe(II)-[cytochrome c] + O2 + 8 H(+)(in) = 4 Fe(III)-[cytochrome c] + 2 H2O + 4 H(+)(out). Functionally, component of the cytochrome c oxidase, the last enzyme in the mitochondrial electron transport chain which drives oxidative phosphorylation. The respiratory chain contains 3 multisubunit complexes succinate dehydrogenase (complex II, CII), ubiquinol-cytochrome c oxidoreductase (cytochrome b-c1 complex, complex III, CIII) and cytochrome c oxidase (complex IV, CIV), that cooperate to transfer electrons derived from NADH and succinate to molecular oxygen, creating an electrochemical gradient over the inner membrane that drives transmembrane transport and the ATP synthase. Cytochrome c oxidase is the component of the respiratory chain that catalyzes the reduction of oxygen to water. Electrons originating from reduced cytochrome c in the intermembrane space (IMS) are transferred via the dinuclear copper A center (CU(A)) of subunit 2 and heme A of subunit 1 to the active site in subunit 1, a binuclear center (BNC) formed by heme A3 and copper B (CU(B)). The BNC reduces molecular oxygen to 2 water molecules using 4 electrons from cytochrome c in the IMS and 4 protons from the mitochondrial matrix. The chain is Cytochrome c oxidase subunit 3 (COIII) from Metridium senile (Brown sea anemone).